The following is a 242-amino-acid chain: Aspartate/glutamate leucyltransferase (242 aa).

It belongs to the R-transferase family. Bpt subfamily.

Its subcellular location is the cytoplasm. It catalyses the reaction N-terminal L-glutamyl-[protein] + L-leucyl-tRNA(Leu) = N-terminal L-leucyl-L-glutamyl-[protein] + tRNA(Leu) + H(+). The catalysed reaction is N-terminal L-aspartyl-[protein] + L-leucyl-tRNA(Leu) = N-terminal L-leucyl-L-aspartyl-[protein] + tRNA(Leu) + H(+). Functionally, functions in the N-end rule pathway of protein degradation where it conjugates Leu from its aminoacyl-tRNA to the N-termini of proteins containing an N-terminal aspartate or glutamate. The polypeptide is Aspartate/glutamate leucyltransferase (Chromobacterium violaceum (strain ATCC 12472 / DSM 30191 / JCM 1249 / CCUG 213 / NBRC 12614 / NCIMB 9131 / NCTC 9757 / MK)).